A 150-amino-acid chain; its full sequence is Large ribosomal subunit protein bL9 (150 aa).

It belongs to the bacterial ribosomal protein bL9 family.

Binds to the 23S rRNA. This chain is Large ribosomal subunit protein bL9, found in Burkholderia thailandensis (strain ATCC 700388 / DSM 13276 / CCUG 48851 / CIP 106301 / E264).